The sequence spans 272 residues: Hydroxyacylglutathione hydrolase (272 aa).

Zn(2+) contacts are provided by His-62, His-64, Asp-66, His-67, His-126, Asp-146, and His-184.

It belongs to the metallo-beta-lactamase superfamily. Glyoxalase II family. In terms of assembly, monomer. Zn(2+) is required as a cofactor.

It carries out the reaction an S-(2-hydroxyacyl)glutathione + H2O = a 2-hydroxy carboxylate + glutathione + H(+). It participates in secondary metabolite metabolism; methylglyoxal degradation; (R)-lactate from methylglyoxal: step 2/2. Its function is as follows. Thiolesterase that catalyzes the hydrolysis of S-D-lactoyl-glutathione to form glutathione and D-lactic acid. This chain is Hydroxyacylglutathione hydrolase, found in Saccharophagus degradans (strain 2-40 / ATCC 43961 / DSM 17024).